The chain runs to 946 residues: Alanine--tRNA ligase, cytoplasmic (946 aa).

Residues His591, His595, Cys710, and His714 each contribute to the Zn(2+) site.

The protein belongs to the class-II aminoacyl-tRNA synthetase family. Monomer. The cofactor is Zn(2+).

Its subcellular location is the cytoplasm. It catalyses the reaction tRNA(Ala) + L-alanine + ATP = L-alanyl-tRNA(Ala) + AMP + diphosphate. Functionally, catalyzes the attachment of alanine to tRNA(Ala) in a two-step reaction: alanine is first activated by ATP to form Ala-AMP and then transferred to the acceptor end of tRNA(Ala). Also edits incorrectly charged tRNA(Ala) via its editing domain. This Dictyostelium discoideum (Social amoeba) protein is Alanine--tRNA ligase, cytoplasmic (alaS).